A 1141-amino-acid polypeptide reads, in one-letter code: MTKRVITDRLRSTLQDSNYSDVGRDLINFILWELKFLDCFLHLKSLPFASECCMLDVSQKMIEILKSRILSICPDSGIQLWKGNLSMKTLYLEDVRVTLDSFGYWKEVIWKTKQEFSAEYSFPNTSLAANKVDDVSPKFVMEVIDVFVENLNVVVKINDPISWLFVPEHKEQIEQVLKELKLLRFFVWFVSNKYIEPQYQHTTFYIHALIEASHISMAVWLHLPVCSKGNQNLAPSEVSRLLSDFVEMKIKATEPGISRNNIYIDVLQDLKLTIPQAQKKHAAESGIVEILTHSMMVGLSDQMANLQEMLCLLRDNLIHLPILDLEFHLQDMDSIIVDAGLLIYSLYDIKGEKEDTTLEDINRELGFDLPRNIEPIKVIVYLVMQKAFQCNLPRIHGLGYVDFLLKNLKDFQGRYSDSLAFLKNQIQVIQMEFEILQPFLKVVVEEPHNKFKRLNEDCAIQIIRKAHEVEYVVDACINKGIPHWCLERWLQDIIEETTCIKAKIQEKNTVEDTMKTVITHTSSQLARTPRMNEEIVWFKDVIENLRNRLLNGTKGQDVISIHSMPGLGKTTLANRLYSDRSIVSQFDICAQCCVSQVYSYKELLLALLCDAIGEGSDQHREIHANELADMLRKTLLPRRYLILVDDVWENSAWDDLRGCFPDVNNRSRIILTTRHHEVAKYASVHSEPLHLRMFEEDESWKLLEKRVFGEESCSPLLKDVGLRIAKMCRQLPLSIVLVADVLLDFCKERAAEENFLLWIKRDQITKAAYSHKQHTHLALTEMDTLLEWSTSGSLVGSVLFKNYDPYFVRSLLSSHAFEISHILPHFKFLKVLDLEHQVVIDFIPTELPYLRYFSALIHQNSIPSSISNLWNLETLILKGTSAKTLLLPSTVWDMVKLGYLYIPNFSPENKKALLENSPKLDDLETLSNPYFARVEDAELMLRKTPNLRKLICEVECLEYPHQYHVLNFPVQLEILKFYRSKASKTIPFCISAPNLKYLKLSGYYLDSQYLSETVDHLKHLEVLKLYNVEFGDYREWEVSNGKFPQLKILKLENLSLMKWIVADDAFPILEQLVLHDCRDLMEIPSCFMDILSLKYIEVDMSNKSVVKSAKNIEETQVEDNQNTNFKLVIIKVHYWEKLYSA.

Positions 417–437 form a coiled coil; it reads DSLAFLKNQIQVIQMEFEILQ. The 227-residue stretch at 516-742 folds into the NB-ARC domain; it reads TVITHTSSQL…LSIVLVADVL (227 aa). LRR repeat units lie at residues 826–851, 869–894, 992–1016, 1017–1041, and 1043–1068; these read FKFLKVLDLEHQVVIDFIPTELPYLR, LWNLETLILKGTSAKTLLLPSTVWDM, APNLKYLKLSGYYLDSQYLSETVDH, LKHLEVLKLYNVEFGDYREWEVSNG, and FPQLKILKLENLSLMKWIVADDAFPI.

Belongs to the disease resistance NB-LRR family.

It is found in the cytoplasm. Its subcellular location is the membrane. Functionally, confers resistance to late blight (Phytophthora infestans) races carrying the avirulence gene Avr1. Resistance proteins guard the plant against pathogens that contain an appropriate avirulence protein via an indirect interaction with this avirulence protein. That triggers a defense system including the hypersensitive response, which restricts the pathogen growth. This Solanum demissum (Wild potato) protein is Putative late blight resistance protein homolog R1B-13 (R1B-13).